The primary structure comprises 161 residues: uncharacterized protein (161 aa).

This is an uncharacterized protein from Methanocaldococcus jannaschii (strain ATCC 43067 / DSM 2661 / JAL-1 / JCM 10045 / NBRC 100440) (Methanococcus jannaschii).